A 469-amino-acid polypeptide reads, in one-letter code: ATP synthase subunit beta (469 aa).

156–163 (GGAGVGKT) contacts ATP.

It belongs to the ATPase alpha/beta chains family. As to quaternary structure, F-type ATPases have 2 components, CF(1) - the catalytic core - and CF(0) - the membrane proton channel. CF(1) has five subunits: alpha(3), beta(3), gamma(1), delta(1), epsilon(1). CF(0) has three main subunits: a(1), b(2) and c(9-12). The alpha and beta chains form an alternating ring which encloses part of the gamma chain. CF(1) is attached to CF(0) by a central stalk formed by the gamma and epsilon chains, while a peripheral stalk is formed by the delta and b chains.

It localises to the cell membrane. The enzyme catalyses ATP + H2O + 4 H(+)(in) = ADP + phosphate + 5 H(+)(out). Functionally, produces ATP from ADP in the presence of a proton gradient across the membrane. The catalytic sites are hosted primarily by the beta subunits. This Bacillus mycoides (strain KBAB4) (Bacillus weihenstephanensis) protein is ATP synthase subunit beta.